A 130-amino-acid chain; its full sequence is Small ribosomal subunit protein uS9 (130 aa).

The segment at 105–130 (TRDPRMKERKKYGLKGARRAPQFSKR) is disordered. The segment covering 111 to 130 (KERKKYGLKGARRAPQFSKR) has biased composition (basic residues).

The protein belongs to the universal ribosomal protein uS9 family.

In Bacillus pumilus (strain SAFR-032), this protein is Small ribosomal subunit protein uS9.